A 335-amino-acid polypeptide reads, in one-letter code: Large ribosomal subunit protein uL3 (335 aa).

The segment at 1-20 (MATIHRPRRGSLAFSPRKRA) is disordered.

The protein belongs to the universal ribosomal protein uL3 family. Part of the 50S ribosomal subunit. Forms a cluster with proteins L14 and L24e.

Its function is as follows. One of the primary rRNA binding proteins, it binds directly near the 3'-end of the 23S rRNA, where it nucleates assembly of the 50S subunit. The protein is Large ribosomal subunit protein uL3 of Methanothrix thermoacetophila (strain DSM 6194 / JCM 14653 / NBRC 101360 / PT) (Methanosaeta thermophila).